The primary structure comprises 421 residues: PDZ and LIM domain protein 7 (421 aa).

The PDZ domain maps to 1–85 (MEEYKVTLDG…KLGLVLSRFA (85 aa)). Residues 115–193 (IARPFGSGTP…STGPAVRPPW (79 aa)) are disordered. A compositionally biased stretch (polar residues) spans 147–172 (YPSSQMPQGQLQNGQKSRTVSNVSGK). 3 LIM zinc-binding domains span residues 244–302 (PVCS…ARFA), 303–362 (PNCA…MFGT), and 363–421 (KCRG…FSNV).

The protein resides in the cytoplasm. Its subcellular location is the cytoskeleton. May function as a scaffold on which the coordinated assembly of proteins can occur. May play a role as an adapter that, via its PDZ domain, localizes LIM-binding proteins to actin filaments of both skeletal muscle and nonmuscle tissues. The chain is PDZ and LIM domain protein 7 (pdlim7) from Xenopus laevis (African clawed frog).